The sequence spans 241 residues: 1-(5-phosphoribosyl)-5-[(5-phosphoribosylamino)methylideneamino] imidazole-4-carboxamide isomerase (241 aa).

D8 functions as the Proton acceptor in the catalytic mechanism. The active-site Proton donor is D129.

It belongs to the HisA/HisF family.

The protein resides in the cytoplasm. The catalysed reaction is 1-(5-phospho-beta-D-ribosyl)-5-[(5-phospho-beta-D-ribosylamino)methylideneamino]imidazole-4-carboxamide = 5-[(5-phospho-1-deoxy-D-ribulos-1-ylimino)methylamino]-1-(5-phospho-beta-D-ribosyl)imidazole-4-carboxamide. Its pathway is amino-acid biosynthesis; L-histidine biosynthesis; L-histidine from 5-phospho-alpha-D-ribose 1-diphosphate: step 4/9. This chain is 1-(5-phosphoribosyl)-5-[(5-phosphoribosylamino)methylideneamino] imidazole-4-carboxamide isomerase, found in Caulobacter sp. (strain K31).